Consider the following 486-residue polypeptide: Protein nucleotidyltransferase YdiU (486 aa).

Residues Gly-90, Gly-92, Arg-93, Lys-113, Asp-125, Gly-126, Arg-176, and Arg-183 each contribute to the ATP site. Asp-252 functions as the Proton acceptor in the catalytic mechanism. Residues Asn-253 and Asp-262 each contribute to the Mg(2+) site. Position 262 (Asp-262) interacts with ATP.

It belongs to the SELO family. Requires Mg(2+) as cofactor. The cofactor is Mn(2+).

The catalysed reaction is L-seryl-[protein] + ATP = 3-O-(5'-adenylyl)-L-seryl-[protein] + diphosphate. It carries out the reaction L-threonyl-[protein] + ATP = 3-O-(5'-adenylyl)-L-threonyl-[protein] + diphosphate. It catalyses the reaction L-tyrosyl-[protein] + ATP = O-(5'-adenylyl)-L-tyrosyl-[protein] + diphosphate. The enzyme catalyses L-histidyl-[protein] + UTP = N(tele)-(5'-uridylyl)-L-histidyl-[protein] + diphosphate. The catalysed reaction is L-seryl-[protein] + UTP = O-(5'-uridylyl)-L-seryl-[protein] + diphosphate. It carries out the reaction L-tyrosyl-[protein] + UTP = O-(5'-uridylyl)-L-tyrosyl-[protein] + diphosphate. In terms of biological role, nucleotidyltransferase involved in the post-translational modification of proteins. It can catalyze the addition of adenosine monophosphate (AMP) or uridine monophosphate (UMP) to a protein, resulting in modifications known as AMPylation and UMPylation. The chain is Protein nucleotidyltransferase YdiU from Pseudomonas putida (strain ATCC 700007 / DSM 6899 / JCM 31910 / BCRC 17059 / LMG 24140 / F1).